Reading from the N-terminus, the 295-residue chain is Cyclin-G1 (295 aa).

Belongs to the cyclin family. Cyclin G subfamily. As to expression, high levels in skeletal muscle, ovary, kidney and colon.

Its subcellular location is the nucleus. In terms of biological role, may play a role in growth regulation. Is associated with G2/M phase arrest in response to DNA damage. May be an intermediate by which p53 mediates its role as an inhibitor of cellular proliferation. The protein is Cyclin-G1 (CCNG1) of Homo sapiens (Human).